The sequence spans 291 residues: Geranyl diphosphate 2-C-methyltransferase (291 aa).

This sequence belongs to the geranyl diphosphate 2-C-methyltransferase family. Requires Mg(2+) as cofactor.

The catalysed reaction is (2E)-geranyl diphosphate + S-adenosyl-L-methionine = (E)-2-methylgeranyl diphosphate + S-adenosyl-L-homocysteine + H(+). Functionally, catalyzes the SAM-dependent methylation of geranyl diphosphate (GPP) to yield (E)-2-methylgeranyl diphosphate (2-MeGPP). In Streptomyces ambofaciens (strain ATCC 23877 / 3486 / DSM 40053 / JCM 4204 / NBRC 12836 / NRRL B-2516), this protein is Geranyl diphosphate 2-C-methyltransferase.